Consider the following 557-residue polypeptide: Aerobic glycerol-3-phosphate dehydrogenase (557 aa).

Position 21 to 49 (21 to 49 (DVVIIGGGITGAGIALDASERGMKVALVE)) interacts with FAD.

It belongs to the FAD-dependent glycerol-3-phosphate dehydrogenase family. It depends on FAD as a cofactor.

The protein localises to the cytoplasm. The catalysed reaction is a quinone + sn-glycerol 3-phosphate = dihydroxyacetone phosphate + a quinol. The protein operates within polyol metabolism; glycerol degradation via glycerol kinase pathway; glycerone phosphate from sn-glycerol 3-phosphate (aerobic route): step 1/1. In Staphylococcus saprophyticus subsp. saprophyticus (strain ATCC 15305 / DSM 20229 / NCIMB 8711 / NCTC 7292 / S-41), this protein is Aerobic glycerol-3-phosphate dehydrogenase (glpD).